Here is a 332-residue protein sequence, read N- to C-terminus: MSVVRIGPYTLPNRLILAPMAGVTDRPFRQLCRRLGAGMVVSEMVTSDVRLWNSRKSRLRLIHDGEDEPRSVQIAGGDPAMLAEAAQRNVELGAQIIDINMGCPAKKVCNKAAGSALLRDEALVAEILDAVVRAVDVPVTLKIRTGWDRDNRNGVTVAKLAEQAGIQALAVHGRTRADLYTGEAEYETIAAIKQAVSIPVFANGDIDSPEKARKVIEQTGVDALLIGRAAQGRPWIFREIDHYLRTGEHLPAAPLPEVQSILLEHLAELHLFYGEEMGVRIARKHVGWYLATLPGAREFRAQFNRLQDTDAQCASVRQFFAERQNNGTGVAA.

FMN-binding positions include P19–A21 and Q73. The active-site Proton donor is the C103. Residues K142, N203–D205, and G227–R228 each bind FMN.

It belongs to the Dus family. DusB subfamily. FMN is required as a cofactor.

It carries out the reaction a 5,6-dihydrouridine in tRNA + NAD(+) = a uridine in tRNA + NADH + H(+). It catalyses the reaction a 5,6-dihydrouridine in tRNA + NADP(+) = a uridine in tRNA + NADPH + H(+). Functionally, catalyzes the synthesis of 5,6-dihydrouridine (D), a modified base found in the D-loop of most tRNAs, via the reduction of the C5-C6 double bond in target uridines. This is tRNA-dihydrouridine synthase B from Pseudomonas aeruginosa (strain ATCC 15692 / DSM 22644 / CIP 104116 / JCM 14847 / LMG 12228 / 1C / PRS 101 / PAO1).